A 138-amino-acid chain; its full sequence is Phospholipase A2 crotoxin basic chain CBa2 (138 aa).

The N-terminal stretch at 1–16 is a signal peptide; that stretch reads MRALWIVAVLLVGVEG. Cystine bridges form between C42-C131, C44-C60, C59-C111, C65-C138, C66-C104, C73-C97, and C91-C102. Residues Y43, G45, and G47 each contribute to the Ca(2+) site. H63 is a catalytic residue. Position 64 (D64) interacts with Ca(2+). Residue D105 is part of the active site.

Belongs to the phospholipase A2 family. Group II subfamily. D49 sub-subfamily. In terms of assembly, heterodimer of one of the acidic (CA1, CA2, CA3 or CA4) and one of the basic (CBa1, CBa2, CBb, CBc or CBd) subunits; non-covalently linked. The acidic subunit is non-toxic, without enzymatic activity and comprises 3 peptides that are cross-linked by 5 disulfide bridges. The basic subunit is toxic, has phospholipase A2 activity and is composed of a single chain. Multiple variants of each subunit give different crotoxin complexes that can be subdivided into 2 classes: (1) those of high toxicity, low PLA2 activity (CBb, CBc and CBd linked with high affinity to any CA) and high stability (K(d)=4.5 nM) and (2) those of moderate toxicity, high PLA2 activity (CBa2 linked with low affinity to any CA) and low stability (K(d)=25 nM). Interacts with human NBD1 domain of CFTR. It depends on Ca(2+) as a cofactor. As to expression, expressed by the venom gland.

The protein resides in the secreted. It catalyses the reaction a 1,2-diacyl-sn-glycero-3-phosphocholine + H2O = a 1-acyl-sn-glycero-3-phosphocholine + a fatty acid + H(+). Functionally, heterodimer CA-CB: Crotoxin is a potent presynaptic neurotoxin that possesses phospholipase A2 (PLA2) activity and exerts a lethal action by blocking neuromuscular transmission. It consists of a non-covalent association of a basic and weakly toxic PLA2 subunit (CBa2, CBb, CBc, or CBd), with a small acidic, non-enzymatic and non-toxic subunit (CA1, CA2, CA3 or CA4). The complex acts by binding to a specific 48-kDa protein (R48) receptor located on presynaptic membranes, forming a transient ternary complex CA-CB-R48, followed by dissociation of the CA-CB complex and release of the CA subunit. At equilibrium, only the CB subunits remain associated with the specific crotoxin receptor. In addition to neurotoxicity, crotoxin has been found to exert myotoxicity, nephrotoxicity, and cardiovascular toxicity. Moreover, anti-inflammatory, immunomodulatory, anti-tumor and analgesic effects of crotoxin have also been reported. Its function is as follows. Monomer CBa2: The basic subunit of crotoxin is a snake venom phospholipase A2 (PLA2) that exhibits weak neurotoxicity (10-fold less than the heterodimer) and strong anticoagulant effects by binding to factor Xa (F10) and inhibiting the prothrombinase activity (IC(50) is 41 nM). In addition, it shows the same effects described for the heterodimer and binds the nucleotide-binding domain (NBD1) of CFTR chloride channels and increases the channel current. PLA2 catalyzes the calcium-dependent hydrolysis of the 2-acyl groups in 3-sn-phosphoglycerides. The sequence is that of Phospholipase A2 crotoxin basic chain CBa2 from Crotalus durissus terrificus (South American rattlesnake).